A 433-amino-acid chain; its full sequence is Serendipity locus protein delta (433 aa).

The ZAD domain occupies Met-1–Lys-90. Zn(2+)-binding residues include Cys-4, Cys-7, Cys-61, and Cys-64. Residues Asp-141–Glu-162 are disordered. The span at Val-149–Glu-162 shows a compositional bias: acidic residues. Positions Pro-187–Lys-193 match the Nuclear localization signal motif. 7 C2H2-type zinc fingers span residues Gln-194–His-217, His-223–His-245, Lys-251–His-273, Tyr-279–His-301, Ile-308–His-330, His-337–His-359, and Gly-405–His-428.

In terms of assembly, homodimer (via ZAD domain) in solution. Binds DNA as a homodimer. N-terminal regions of the protein are required, in addition to the zinc fingers, for the specificity of chromatin-binding. As to expression, predominantly localized to the sub- and supraesophagal ganglia and the ventral nerve cord in the embryo, after dorsal closure.

Its subcellular location is the nucleus. Its function is as follows. Transcriptional activator that controls bicoid gene expression during oogenesis. Found in transcriptionally active cells. Binds to specific sites on polytene chromosomes of third instar larvae. Binds to the consensus DNA sequence 5'-YTAGAGATGGRAA-3'. The chain is Serendipity locus protein delta (Sry-delta) from Drosophila melanogaster (Fruit fly).